Consider the following 116-residue polypeptide: Large ribosomal subunit protein bL20 (116 aa).

The protein belongs to the bacterial ribosomal protein bL20 family.

Binds directly to 23S ribosomal RNA and is necessary for the in vitro assembly process of the 50S ribosomal subunit. It is not involved in the protein synthesizing functions of that subunit. This is Large ribosomal subunit protein bL20 from Nitratiruptor sp. (strain SB155-2).